A 250-amino-acid chain; its full sequence is Ureidoacrylate amidohydrolase RutB (250 aa).

The active-site Proton acceptor is Asp-44. Lys-153 is an active-site residue. The active-site Nucleophile is the Cys-186.

It belongs to the isochorismatase family. RutB subfamily.

The catalysed reaction is (Z)-3-ureidoacrylate + H2O + H(+) = (Z)-3-aminoacrylate + NH4(+) + CO2. It carries out the reaction (Z)-3-ureidoacrylate + H2O = (Z)-3-aminoacrylate + carbamate + H(+). The enzyme catalyses (Z)-2-methylureidoacrylate + H2O + H(+) = (Z)-2-methylaminoacrylate + NH4(+) + CO2. Its function is as follows. Hydrolyzes ureidoacrylate to form aminoacrylate and carbamate. The carbamate hydrolyzes spontaneously, thereby releasing one of the nitrogen atoms of the pyrimidine ring as ammonia and one of its carbon atoms as CO2. This Pantoea ananatis (strain LMG 20103) protein is Ureidoacrylate amidohydrolase RutB.